The sequence spans 522 residues: Target of rapamycin complex 2 subunit MAPKAP1 (522 aa).

Ala2 is subject to N-acetylalanine. Residues 2 to 184 form an interaction with MAP3K2 region; sequence AFLDNPTIIL…KKIDVYLPLH (183 aa). The interaction with NBN stretch occupies residues 2–267; it reads AFLDNPTIIL…GFSTLALVEK (266 aa). The segment at 38–59 is disordered; the sequence is LEKTHPPSVPGDSGSEVQGSSG. Thr86 carries the post-translational modification Phosphothreonine. Phosphoserine occurs at positions 128, 186, 315, and 356. One can recognise a CRIM domain in the interval 139–267; that stretch reads QSILSVRLEQ…GFSTLALVEK (129 aa). Residues 279–353 are SIN1-type RBD; it reads LFVRINAAHG…QNAWEFCLVR (75 aa). The SIN1-type PH domain occupies 382–487; the sequence is HYKSFKVSMI…IVLKVNYILE (106 aa). Residue Arg393 participates in a 1,2-diacyl-sn-glycero-3-phospho-(1D-myo-inositol-3,4,5-trisphosphate) binding. Position 398 is a phosphothreonine (Thr398). Residues Lys428 and Lys464 each contribute to the a 1,2-diacyl-sn-glycero-3-phospho-(1D-myo-inositol-3,4,5-trisphosphate) site. The interval 468–522 is interaction with ATF2; sequence FESDAATVSEIVLKVNYILESRASTARADYFAQKQRKLNRRTSFSFQKEKKSGQQ. The residue at position 510 (Ser510) is a Phosphoserine.

It belongs to the SIN1 family. As to quaternary structure, component of the mechanistic target of rapamycin complex 2 (mTORC2), consisting in two heterotretramers composed of MTOR, MLST8, RICTOR and MAPKAP1/SIN1. The mTORC2 core complex associates with PRR5/PROTOR1 and/or PRR5L/PROTOR2. Contrary to mTORC1, mTORC2 does not bind to and is not sensitive to FKBP12-rapamycin. Interacts with MAP3K2. Interacts with ATF2. Interacts with MAPK8. Interacts with GTP-bound HRAS and KRAS; inhibiting their activity. Interacts with IFNAR2. Post-translationally, phosphorylation at Ser-128 by PKC promotes relocalization to the perinuclear region, where the mTORC2 complex specifically mediates phosphorylation of SGK1. Phosphorylated at Thr-86 by AKT1 or RPS6KB1 in the presence of growth factors; the effect of this phosphorylation is however unclear. According to two studies, phosphorylation at Thr-86 by AKT1 is part of a positive feedback loop that increases mTORC2 activation. According to another study, phosphorylation at Thr-86 and Thr-398 by RPS6KB1 promotes dissociation from the mTORC2 complex, leading to inhibit mTORC2 signaling.

The protein localises to the cell membrane. It localises to the endoplasmic reticulum membrane. Its subcellular location is the early endosome membrane. It is found in the late endosome membrane. The protein resides in the lysosome membrane. The protein localises to the golgi apparatus membrane. It localises to the mitochondrion outer membrane. Its subcellular location is the cytoplasm. It is found in the perinuclear region. The protein resides in the nucleus. With respect to regulation, phosphatidylinositol 3,4,5-trisphosphate (PI(3,4,5)P3) promotes MTOR activation by relieving MAPKAP1/SIN1-mediated inhibition of MTOR that takes place in absence of PI(3,4,5)P3. Functionally, component of the mechanistic target of rapamycin complex 2 (mTORC2), which transduces signals from growth factors to pathways involved in proliferation, cytoskeletal organization, lipogenesis and anabolic output. In response to growth factors, mTORC2 phosphorylates and activates AGC protein kinase family members, including AKT (AKT1, AKT2 and AKT3), PKC (PRKCA, PRKCB and PRKCE) and SGK1. In contrast to mTORC1, mTORC2 is nutrient-insensitive. Within the mTORC2 complex, MAPKAP1/SIN1 acts as a substrate adapter which recognizes and binds AGC protein kinase family members for phosphorylation by MTOR. mTORC2 plays a critical role in AKT1 activation by mediating phosphorylation of different sites depending on the context, such as 'Thr-450', 'Ser-473', 'Ser-477' or 'Thr-479', facilitating the phosphorylation of the activation loop of AKT1 on 'Thr-308' by PDPK1/PDK1 which is a prerequisite for full activation. mTORC2 catalyzes the phosphorylation of SGK1 at 'Ser-422' and of PRKCA on 'Ser-657'. The mTORC2 complex also phosphorylates various proteins involved in insulin signaling, such as FBXW8 and IGF2BP1. mTORC2 acts upstream of Rho GTPases to regulate the actin cytoskeleton, probably by activating one or more Rho-type guanine nucleotide exchange factors. mTORC2 promotes the serum-induced formation of stress-fibers or F-actin. MAPKAP1 inhibits MAP3K2 by preventing its dimerization and autophosphorylation. Inhibits HRAS and KRAS independently of mTORC2 complex. Enhances osmotic stress-induced phosphorylation of ATF2 and ATF2-mediated transcription. Involved in ciliogenesis, regulates cilia length through its interaction with CCDC28B independently of mTORC2 complex. This chain is Target of rapamycin complex 2 subunit MAPKAP1, found in Rattus norvegicus (Rat).